The primary structure comprises 144 residues: Succinate dehydrogenase cytochrome b560 subunit (144 aa).

3 helical membrane passes run 40–60 (IFHR…ILIL), 84–104 (GFLF…HLFA), and 124–144 (LTGY…WIIF). Residue His-101 coordinates heme.

It belongs to the cytochrome b560 family. In terms of assembly, forms part of complex II containing four subunits: a 70 kDa flavoprotein (FP), a 27 kDa iron-sulfur protein (IP), a cytochrome B and a membrane-anchoring protein. Requires heme as cofactor.

The protein resides in the mitochondrion inner membrane. The protein operates within carbohydrate metabolism; tricarboxylic acid cycle. Functionally, membrane-anchoring subunit of succinate dehydrogenase (SDH) that is involved in complex II of the mitochondrial electron transport chain and is responsible for transferring electrons from succinate to ubiquinone (coenzyme Q). In Reclinomonas americana, this protein is Succinate dehydrogenase cytochrome b560 subunit (SDH3).